The sequence spans 428 residues: ATP-dependent RNA helicase RhlB (428 aa).

Positions 9 to 37 (QKFSDFALHPLVLEALEKKGFQHCTPIQA) match the Q motif motif. The Helicase ATP-binding domain maps to 40–219 (LPLTLSGRDV…FEQMNNAEYV (180 aa)). 53–60 (AQTGTGKT) contributes to the ATP binding site. The DEAD box motif lies at 165-168 (DEAD). The region spanning 245–390 (RLLQTLIEEE…VSKYNSDALL (146 aa)) is the Helicase C-terminal domain. The tract at residues 392–428 (DLPAPKRLARPRGGNGPRRNSAPRRGGAPRNNRKRSG) is disordered. The span at 408–421 (PRRNSAPRRGGAPR) shows a compositional bias: low complexity.

Belongs to the DEAD box helicase family. RhlB subfamily. In terms of assembly, component of the RNA degradosome, which is a multiprotein complex involved in RNA processing and mRNA degradation.

It localises to the cytoplasm. It carries out the reaction ATP + H2O = ADP + phosphate + H(+). Functionally, DEAD-box RNA helicase involved in RNA degradation. Has RNA-dependent ATPase activity and unwinds double-stranded RNA. This is ATP-dependent RNA helicase RhlB from Serratia proteamaculans (strain 568).